The sequence spans 148 residues: Endoribonuclease YbeY (148 aa).

Positions 105, 109, and 115 each coordinate Zn(2+).

Belongs to the endoribonuclease YbeY family. The cofactor is Zn(2+).

It is found in the cytoplasm. Functionally, single strand-specific metallo-endoribonuclease involved in late-stage 70S ribosome quality control and in maturation of the 3' terminus of the 16S rRNA. The protein is Endoribonuclease YbeY of Chlorobium phaeovibrioides (strain DSM 265 / 1930) (Prosthecochloris vibrioformis (strain DSM 265)).